Here is a 449-residue protein sequence, read N- to C-terminus: Probable glycosyltransferase 5 (449 aa).

Positions 1 to 14 are enriched in basic and acidic residues; that stretch reads MMEKHGGKVTSDRR. Residues 1 to 24 are disordered; the sequence is MMEKHGGKVTSDRRAGRRQHGQRC. The Cytoplasmic segment spans residues 1 to 28; the sequence is MMEKHGGKVTSDRRAGRRQHGQRCSASD. A helical; Signal-anchor for type II membrane protein membrane pass occupies residues 29 to 49; sequence AAPLVVVVILIVAALFLILGP. Residues 50–449 lie on the Lumenal side of the membrane; the sequence is TGSSSFTVPR…HPTFRAARPT (400 aa). The interval 74–109 is disordered; sequence APPPPPPPAQMQAGANASSEEDSGLPPPRQLTDPPY. Residues asparagine 89, asparagine 413, and asparagine 422 are each glycosylated (N-linked (GlcNAc...) asparagine).

This sequence belongs to the glycosyltransferase 34 family.

Its subcellular location is the golgi apparatus membrane. Its function is as follows. Probable glycosyltransferase that may be involved in the biosynthesis of xyloglucan. The sequence is that of Probable glycosyltransferase 5 from Oryza sativa subsp. japonica (Rice).